Consider the following 471-residue polypeptide: Siroheme synthase (471 aa).

A precorrin-2 dehydrogenase /sirohydrochlorin ferrochelatase region spans residues 1 to 203; it reads MEYLPLFADL…GRLEQAEQAL (203 aa). NAD(+) is bound by residues 22 to 23 and 43 to 44; these read EV and RA. Phosphoserine is present on Ser128. Positions 215–471 are uroporphyrinogen-III C-methyltransferase; sequence GEVALVGAGP…QKRASVVNLA (257 aa). Pro224 is an S-adenosyl-L-methionine binding site. Asp247 (proton acceptor) is an active-site residue. Lys269 (proton donor) is an active-site residue. S-adenosyl-L-methionine contacts are provided by residues 300-302, Ile305, 330-331, Met382, and Gly411; these read GGD and TA.

The protein in the N-terminal section; belongs to the precorrin-2 dehydrogenase / sirohydrochlorin ferrochelatase family. In the C-terminal section; belongs to the precorrin methyltransferase family.

The enzyme catalyses uroporphyrinogen III + 2 S-adenosyl-L-methionine = precorrin-2 + 2 S-adenosyl-L-homocysteine + H(+). It carries out the reaction precorrin-2 + NAD(+) = sirohydrochlorin + NADH + 2 H(+). The catalysed reaction is siroheme + 2 H(+) = sirohydrochlorin + Fe(2+). The protein operates within cofactor biosynthesis; adenosylcobalamin biosynthesis; precorrin-2 from uroporphyrinogen III: step 1/1. It participates in cofactor biosynthesis; adenosylcobalamin biosynthesis; sirohydrochlorin from precorrin-2: step 1/1. It functions in the pathway porphyrin-containing compound metabolism; siroheme biosynthesis; precorrin-2 from uroporphyrinogen III: step 1/1. Its pathway is porphyrin-containing compound metabolism; siroheme biosynthesis; siroheme from sirohydrochlorin: step 1/1. The protein operates within porphyrin-containing compound metabolism; siroheme biosynthesis; sirohydrochlorin from precorrin-2: step 1/1. Functionally, multifunctional enzyme that catalyzes the SAM-dependent methylations of uroporphyrinogen III at position C-2 and C-7 to form precorrin-2 via precorrin-1. Then it catalyzes the NAD-dependent ring dehydrogenation of precorrin-2 to yield sirohydrochlorin. Finally, it catalyzes the ferrochelation of sirohydrochlorin to yield siroheme. The protein is Siroheme synthase of Sodalis glossinidius (strain morsitans).